Consider the following 308-residue polypeptide: Acetaldehyde dehydrogenase 1 (308 aa).

Position 10–13 (Ser10–Ile13) interacts with NAD(+). The Acyl-thioester intermediate role is filled by Cys128. Residues Ser159–Asn167 and Asn285 each bind NAD(+).

The protein belongs to the acetaldehyde dehydrogenase family.

It catalyses the reaction acetaldehyde + NAD(+) + CoA = acetyl-CoA + NADH + H(+). The polypeptide is Acetaldehyde dehydrogenase 1 (Salinispora arenicola (strain CNS-205)).